We begin with the raw amino-acid sequence, 465 residues long: Branched-chain amino acid permease BcaP (465 aa).

The next 12 helical transmembrane spans lie at 28–48, 56–76, 88–110, 149–169, 181–201, 219–239, 259–279, 309–329, 359–379, 380–400, 416–436, and 438–458; these read FLAL…PGQV, GVVF…LAYA, AYSW…ALLA, DGGI…IIVF, ILVV…ITVI, FGGF…YIGF, GIIG…LVLV, VVTA…VLAG, VWTL…AFLA, QLIS…IYSL, PFYP…FWGL, and VQAK…YFAY.

This sequence belongs to the amino acid-polyamine-organocation (APC) superfamily.

It localises to the cell membrane. In terms of biological role, branched-chain amino acid transport system that specifically transports branched-chain amino acids (BCAAs) (isoleucine, leucine and valine) and, to a lesser extent, methionine. Important for CodY-mediated regulation, and required for optimal growth in media containing free amino acids as the only amino acid source. The sequence is that of Branched-chain amino acid permease BcaP from Lactococcus lactis subsp. cremoris (strain MG1363).